The chain runs to 362 residues: Lipoprotein p35 (362 aa).

The first 30 residues, 1–30 (MKIKKIKLLKALALTGAFGIVATVPVIVSS), serve as a signal peptide directing secretion. Residue Cys31 is the site of N-palmitoyl cysteine attachment. The S-diacylglycerol cysteine moiety is linked to residue Cys31. Residues 33–53 (STSENNGNGNGNGGTDGNTQQ) form a disordered region.

The protein belongs to the p35 lipoprotein family. The N-terminus is blocked.

It localises to the cell membrane. In terms of biological role, major M.penetrans antigen. The sequence is that of Lipoprotein p35 from Malacoplasma penetrans (strain HF-2) (Mycoplasma penetrans).